Reading from the N-terminus, the 63-residue chain is Large ribosomal subunit protein uL29 (63 aa).

The protein belongs to the universal ribosomal protein uL29 family.

The chain is Large ribosomal subunit protein uL29 from Shewanella loihica (strain ATCC BAA-1088 / PV-4).